The primary structure comprises 166 residues: Phosphopantetheine adenylyltransferase (166 aa).

S9 contacts substrate. ATP-binding positions include 9 to 10 (SF) and H17. Substrate-binding residues include K41, L74, and K88. ATP-binding positions include 89 to 91 (GLR), E99, and 123 to 129 (YIHLSST).

It belongs to the bacterial CoaD family. In terms of assembly, homohexamer. The cofactor is Mg(2+).

It localises to the cytoplasm. It carries out the reaction (R)-4'-phosphopantetheine + ATP + H(+) = 3'-dephospho-CoA + diphosphate. It functions in the pathway cofactor biosynthesis; coenzyme A biosynthesis; CoA from (R)-pantothenate: step 4/5. Its function is as follows. Reversibly transfers an adenylyl group from ATP to 4'-phosphopantetheine, yielding dephospho-CoA (dPCoA) and pyrophosphate. The chain is Phosphopantetheine adenylyltransferase from Pseudarthrobacter chlorophenolicus (strain ATCC 700700 / DSM 12829 / CIP 107037 / JCM 12360 / KCTC 9906 / NCIMB 13794 / A6) (Arthrobacter chlorophenolicus).